The chain runs to 114 residues: Non-specific lipid-transfer protein 2 (114 aa).

An N-terminal signal peptide occupies residues 1–23; the sequence is MEMFGKIACFVVFCMVVVAPHAE. Intrachain disulfides connect cysteine 27/cysteine 73, cysteine 37/cysteine 50, cysteine 51/cysteine 96, and cysteine 71/cysteine 110.

This sequence belongs to the plant LTP family.

Functionally, plant non-specific lipid-transfer proteins transfer phospholipids as well as galactolipids across membranes. May play a role in wax or cutin deposition in the cell walls of expanding epidermal cells and certain secretory tissues. This Solanum lycopersicum (Tomato) protein is Non-specific lipid-transfer protein 2 (LE16).